Here is a 309-residue protein sequence, read N- to C-terminus: Verprolin (309 aa).

Residues 1 to 13 (MAPAPPPPPPAPA) are compositionally biased toward pro residues. Residues 1–273 (MAPAPPPPPP…PNRVDDHGRF (273 aa)) form a disordered region. Residues 27 to 44 (DRSALLNSIQKGKKLKKA) form the WH2 domain. Polar residues predominate over residues 82–91 (LPTSSNNTQQ). The segment covering 141–207 (TSAPPRPSIP…PPKVPPPPLS (67 aa)) has biased composition (pro residues).

The protein belongs to the verprolin family. In terms of assembly, interacts with wsp1. Interacts with myo1 (via SH3 domain). Interacts with actin monomers.

It localises to the cytoplasm. The protein localises to the cytoskeleton. Functionally, involved in cytoskeletal organization and cellular growth. May exert its effects on the cytoskeleton directly, or indirectly via proline-binding proteins such as profilin or proteins possessing SH3 domains. Plays a role in actin patch assembly by enhancing the ability of myo1 to stimulate actin polymerization by the Arp2/3 complex. The protein is Verprolin of Schizosaccharomyces pombe (strain 972 / ATCC 24843) (Fission yeast).